Consider the following 296-residue polypeptide: Ribosomal protein L11 methyltransferase (296 aa).

Residues threonine 145, glycine 166, aspartate 188, and asparagine 230 each contribute to the S-adenosyl-L-methionine site.

This sequence belongs to the methyltransferase superfamily. PrmA family.

The protein resides in the cytoplasm. The enzyme catalyses L-lysyl-[protein] + 3 S-adenosyl-L-methionine = N(6),N(6),N(6)-trimethyl-L-lysyl-[protein] + 3 S-adenosyl-L-homocysteine + 3 H(+). Methylates ribosomal protein L11. The polypeptide is Ribosomal protein L11 methyltransferase (Photorhabdus laumondii subsp. laumondii (strain DSM 15139 / CIP 105565 / TT01) (Photorhabdus luminescens subsp. laumondii)).